A 337-amino-acid polypeptide reads, in one-letter code: Glyceraldehyde-3-phosphate dehydrogenase 2 (337 aa).

Residues 11 to 12 (RI), Asp-35, Arg-80, and Thr-122 each bind NADP(+). Residues 153–155 (SCT), Thr-184, Arg-199, 212–213 (TG), and Arg-235 contribute to the D-glyceraldehyde 3-phosphate site. The active-site Nucleophile is the Cys-154. NADP(+) is bound at residue Asn-317.

In terms of assembly, homotetramer.

It localises to the cytoplasm. The enzyme catalyses D-glyceraldehyde 3-phosphate + phosphate + NADP(+) = (2R)-3-phospho-glyceroyl phosphate + NADPH + H(+). The catalysed reaction is D-glyceraldehyde 3-phosphate + phosphate + NAD(+) = (2R)-3-phospho-glyceroyl phosphate + NADH + H(+). It functions in the pathway carbohydrate biosynthesis; Calvin cycle. Functionally, gap2 has a major role in carbon fixation as a component of the Calvin cycle. Catalyzes the oxidative phosphorylation of glyceraldehyde 3-phosphate (G3P) to 1,3-bisphosphoglycerate (BPG) using the cofactor NADP. The first reaction step involves the formation of a hemiacetal intermediate between G3P and a cysteine residue, and this hemiacetal intermediate is then oxidized to a thioester, with concomitant reduction of NADP to NADPH. The reduced NADPH is then exchanged with the second NAD, and the thioester is attacked by a nucleophilic inorganic phosphate to produce BPG. The chain is Glyceraldehyde-3-phosphate dehydrogenase 2 (gap2) from Nostoc sp. (strain PCC 7120 / SAG 25.82 / UTEX 2576).